Consider the following 338-residue polypeptide: Ferredoxin--NADP reductase (338 aa).

Residues Asp38, Gln46, Tyr51, Val91, Phe125, Asp291, and Thr331 each coordinate FAD.

This sequence belongs to the ferredoxin--NADP reductase type 2 family. In terms of assembly, homodimer. The cofactor is FAD.

It carries out the reaction 2 reduced [2Fe-2S]-[ferredoxin] + NADP(+) + H(+) = 2 oxidized [2Fe-2S]-[ferredoxin] + NADPH. This is Ferredoxin--NADP reductase from Orientia tsutsugamushi (strain Boryong) (Rickettsia tsutsugamushi).